A 79-amino-acid chain; its full sequence is MKKKLFALLKYIIFFPMLCTVLGLLGIPIGLIVNFLRTGSFDFNLKDEIDVVLFTLKIGIPIGFILGLGLWGLSILDRK.

2 helical membrane-spanning segments follow: residues 12 to 32 (IIFF…IGLI) and 51 to 71 (VVLF…LGLW).

As to quaternary structure, probably interacts with cognate toxin CdiA.

It localises to the cell inner membrane. Its function is as follows. Immunity protein component of a toxin-immunity protein module, which functions as a cellular contact-dependent growth inhibition (CDI) system. CDI modules allow bacteria to communicate with and inhibit the growth of closely related neighboring bacteria in a contact-dependent fashion. Protects cells against CdiA from the same strain, its cognate toxin protein. Growth inhibition is reversible upon induction of this protein, occurring about 2.5 hours after induction, and requires an energy source. Does not protect against non-cognate CdiA from E.coli strain 563 / UPEC, D.dadantii strain 3937 or Y.pestis strain CO92. The sequence is that of Immunity protein CdiI from Escherichia coli.